The primary structure comprises 391 residues: 3-ketoacyl-CoA thiolase (391 aa).

C95 functions as the Acyl-thioester intermediate in the catalytic mechanism. Residues H347 and C377 each act as proton acceptor in the active site.

It belongs to the thiolase-like superfamily. Thiolase family. As to quaternary structure, heterotetramer of two alpha chains (FadB) and two beta chains (FadA).

The protein localises to the cytoplasm. The catalysed reaction is an acyl-CoA + acetyl-CoA = a 3-oxoacyl-CoA + CoA. The protein operates within lipid metabolism; fatty acid beta-oxidation. Catalyzes the final step of fatty acid oxidation in which acetyl-CoA is released and the CoA ester of a fatty acid two carbons shorter is formed. The polypeptide is 3-ketoacyl-CoA thiolase (Pseudomonas putida (strain ATCC 47054 / DSM 6125 / CFBP 8728 / NCIMB 11950 / KT2440)).